The following is a 390-amino-acid chain: Neutrophil cytosol factor 1 (390 aa).

The PX domain maps to 4-125 (TFIRHIALLG…DFFKVRPDDL (122 aa)). 2 SH3 domains span residues 156–215 (IILQ…PLDS) and 226–285 (YAGE…KSGQ). The interval 285–390 (QDVSQAQRQI…STKRKLASAV (106 aa)) is disordered. 2 positions are modified to phosphoserine: Ser-303 and Ser-304. Basic residues predominate over residues 309–318 (HSIHQRSRKR). 4 positions are modified to phosphoserine: Ser-320, Ser-328, Ser-345, and Ser-348.

Component of the phagocyte NADPH oxidase complex composed of an obligatory core heterodimer formed by the membrane proteins CYBA and CYBB and the cytosolic regulatory subunits NCF1/p47-phox, NCF2/p67-phox, NCF4/p40-phox and the small GTPase RAC1 or RAC2. Part of a cytosolic complex composed at least by NCF1, NCF2 and NCF4. Interacts (via C-terminus) with NCF2 (via the C-terminal SH3 domain). Interacts with NCF4. Interacts with CYBB. Interacts (via the second SH3 domain) with CYBA; interaction is phosphorylation-dependent. Interacts with NOXA1. Interacts with ADAM15. Interacts with TRAF4. Interacts with FASLG. Interacts with PARK7 (via C-terminus); the interaction is enhanced by LPS and modulates NCF1 phosphorylation and membrane translocation. Post-translationally, phosphorylated by PRKCD; phosphorylation induces activation of NCF1, leading to assembly and activation of the NADPH oxidase complex. As to expression, detected in peripheral blood monocytes and neutrophils (at protein level).

The protein localises to the cytoplasm. The protein resides in the cytosol. It is found in the membrane. Its function is as follows. Subunit of the phagocyte NADPH oxidase complex that mediates the transfer of electrons from cytosolic NADPH to O2 to produce the superoxide anion (O2(-)). In the activated complex, electrons are first transferred from NADPH to flavin adenine dinucleotide (FAD) and subsequently transferred via two heme molecules to molecular oxygen, producing superoxide through an outer-sphere reaction. Activation of the NADPH oxidase complex is initiated by the assembly of cytosolic subunits of the NADPH oxidase complex with the core NADPH oxidase complex to form a complex at the plasma membrane or phagosomal membrane. This activation process is initiated by phosphorylation dependent binding of the cytosolic NCF1/p47-phox subunit to the C-terminus of CYBA/p22-phox. In Homo sapiens (Human), this protein is Neutrophil cytosol factor 1.